The following is a 556-amino-acid chain: Copine-7 (556 aa).

C2 domains lie at 1–128 (MSGD…TRPL) and 135–262 (NAGK…AQWD). The Ca(2+) site is built by Asp-168, Asp-174, Asp-230, Asp-232, and Asp-238. Residues 305–504 (HCTVAIDFTA…PALRDIVQFV (200 aa)) enclose the VWFA domain. Positions 536–556 (KDLPPRSLGGQTGEAGPSSAP) are disordered.

It belongs to the copine family. The cofactor is Ca(2+).

It localises to the cytoplasm. The protein localises to the nucleus. It is found in the cell membrane. In terms of biological role, calcium-dependent phospholipid-binding protein that may play a role in calcium-mediated intracellular processes. The polypeptide is Copine-7 (Rattus norvegicus (Rat)).